Consider the following 464-residue polypeptide: Cysteine--tRNA ligase (464 aa).

Zn(2+) is bound at residue cysteine 29. The 'HIGH' region signature appears at 31–41 (PTVYDFAHIGN). Zn(2+)-binding residues include cysteine 224, histidine 249, and glutamate 253. The 'KMSKS' region signature appears at 282-286 (KMSKS). Lysine 285 provides a ligand contact to ATP.

This sequence belongs to the class-I aminoacyl-tRNA synthetase family. In terms of assembly, monomer. The cofactor is Zn(2+).

The protein localises to the cytoplasm. It catalyses the reaction tRNA(Cys) + L-cysteine + ATP = L-cysteinyl-tRNA(Cys) + AMP + diphosphate. In Afipia carboxidovorans (strain ATCC 49405 / DSM 1227 / KCTC 32145 / OM5) (Oligotropha carboxidovorans), this protein is Cysteine--tRNA ligase.